A 182-amino-acid polypeptide reads, in one-letter code: Epoxyqueuosine reductase QueH (182 aa).

Cys10, Cys11, Cys85, and Cys88 together coordinate [4Fe-4S] cluster. An intrachain disulfide couples Cys165 to Cys167.

This sequence belongs to the QueH family.

It catalyses the reaction epoxyqueuosine(34) in tRNA + AH2 = queuosine(34) in tRNA + A + H2O. The protein operates within tRNA modification; tRNA-queuosine biosynthesis. Functionally, catalyzes the conversion of epoxyqueuosine (oQ) to queuosine (Q), which is a hypermodified base found in the wobble positions of tRNA(Asp), tRNA(Asn), tRNA(His) and tRNA(Tyr). In Dehalococcoides mccartyi (strain ATCC BAA-2266 / KCTC 15142 / 195) (Dehalococcoides ethenogenes (strain 195)), this protein is Epoxyqueuosine reductase QueH.